A 418-amino-acid polypeptide reads, in one-letter code: Light-independent protochlorophyllide reductase subunit N (418 aa).

[4Fe-4S] cluster contacts are provided by Cys-17, Cys-42, and Cys-103.

This sequence belongs to the BchN/ChlN family. In terms of assembly, protochlorophyllide reductase is composed of three subunits; ChlL, ChlN and ChlB. Forms a heterotetramer of two ChlB and two ChlN subunits. [4Fe-4S] cluster is required as a cofactor.

The catalysed reaction is chlorophyllide a + oxidized 2[4Fe-4S]-[ferredoxin] + 2 ADP + 2 phosphate = protochlorophyllide a + reduced 2[4Fe-4S]-[ferredoxin] + 2 ATP + 2 H2O. The protein operates within porphyrin-containing compound metabolism; chlorophyll biosynthesis (light-independent). Functionally, component of the dark-operative protochlorophyllide reductase (DPOR) that uses Mg-ATP and reduced ferredoxin to reduce ring D of protochlorophyllide (Pchlide) to form chlorophyllide a (Chlide). This reaction is light-independent. The NB-protein (ChlN-ChlB) is the catalytic component of the complex. This is Light-independent protochlorophyllide reductase subunit N from Prochlorococcus marinus subsp. pastoris (strain CCMP1986 / NIES-2087 / MED4).